Here is a 265-residue protein sequence, read N- to C-terminus: Sarcotoxin II-1 (265 aa).

Positions 1-22 (MKSFVLFAACMAIIALGSLAHA) are cleaved as a signal peptide. Residues 23–24 (YP) constitute a propeptide, removed by a dipeptidylpeptidase. Gln25 is modified (pyrrolidone carboxylic acid). At Gly264 the chain carries Glycine amide.

It belongs to the attacin/sarcotoxin-2 family. As to expression, synthesized by the fat body and is eventually secreted into the hemolymph.

It localises to the secreted. In terms of biological role, sarcotoxin II is an antibacterial protein which plays a role in the inflammatory response of this insect. The main effect of sarcotoxin II on E.coli may be the inhibition of cell wall synthesis, including septum formation. In Sarcophaga peregrina (Flesh fly), this protein is Sarcotoxin II-1.